A 187-amino-acid polypeptide reads, in one-letter code: Threonylcarbamoyl-AMP synthase (187 aa).

Residues 4 to 187 (QSTIAAAITC…DAMNGKVFRG (184 aa)) form the YrdC-like domain.

Belongs to the SUA5 family. TsaC subfamily.

The protein localises to the cytoplasm. The catalysed reaction is L-threonine + hydrogencarbonate + ATP = L-threonylcarbamoyladenylate + diphosphate + H2O. Required for the formation of a threonylcarbamoyl group on adenosine at position 37 (t(6)A37) in tRNAs that read codons beginning with adenine. Catalyzes the conversion of L-threonine, HCO(3)(-)/CO(2) and ATP to give threonylcarbamoyl-AMP (TC-AMP) as the acyladenylate intermediate, with the release of diphosphate. This chain is Threonylcarbamoyl-AMP synthase, found in Pseudoalteromonas translucida (strain TAC 125).